Consider the following 321-residue polypeptide: Anthranilate phosphoribosyltransferase (321 aa).

5-phospho-alpha-D-ribose 1-diphosphate contacts are provided by residues glycine 72, 75-76 (GD), threonine 80, 82-85 (NVST), 99-107 (KHGNVSITS), and serine 111. Glycine 72 lines the anthranilate pocket. Serine 84 is a binding site for Mg(2+). Asparagine 102 contributes to the anthranilate binding site. Arginine 157 provides a ligand contact to anthranilate. Residues aspartate 216 and glutamate 217 each contribute to the Mg(2+) site.

Belongs to the anthranilate phosphoribosyltransferase family. In terms of assembly, homodimer. Requires Mg(2+) as cofactor.

The catalysed reaction is N-(5-phospho-beta-D-ribosyl)anthranilate + diphosphate = 5-phospho-alpha-D-ribose 1-diphosphate + anthranilate. The protein operates within amino-acid biosynthesis; L-tryptophan biosynthesis; L-tryptophan from chorismate: step 2/5. In terms of biological role, catalyzes the transfer of the phosphoribosyl group of 5-phosphorylribose-1-pyrophosphate (PRPP) to anthranilate to yield N-(5'-phosphoribosyl)-anthranilate (PRA). This Methanococcus maripaludis (strain C7 / ATCC BAA-1331) protein is Anthranilate phosphoribosyltransferase.